The chain runs to 139 residues: Acidic phospholipase A2 H1E6 (139 aa).

Positions 1-16 are cleaved as a signal peptide; sequence MRTLWILAVLQVGVEG. Disulfide bonds link Cys42–Cys132, Cys44–Cys60, Cys59–Cys111, Cys65–Cys139, Cys66–Cys104, Cys73–Cys97, and Cys91–Cys102. Ca(2+) is bound by residues Tyr43, Gly45, and Gly47. His63 is a catalytic residue. Asp64 serves as a coordination point for Ca(2+). Asp105 is a catalytic residue.

As to quaternary structure, homodimer. Ca(2+) is required as a cofactor. As to expression, expressed by the venom gland.

The protein localises to the secreted. It catalyses the reaction a 1,2-diacyl-sn-glycero-3-phosphocholine + H2O = a 1-acyl-sn-glycero-3-phosphocholine + a fatty acid + H(+). Its function is as follows. Snake venom phospholipase A2 (PLA2) that inhibits ADP-induced platelet aggregation. PLA2 catalyzes the calcium-dependent hydrolysis of the 2-acyl groups in 3-sn-phosphoglycerides. The polypeptide is Acidic phospholipase A2 H1E6 (Calloselasma rhodostoma (Malayan pit viper)).